We begin with the raw amino-acid sequence, 821 residues long: E3 ubiquitin-protein ligase RSP5 (821 aa).

A C2 domain is found at 1-112 (MGSNLPAQPN…QMGGDEMLTR (112 aa)). 2 stretches are compositionally biased toward polar residues: residues 133 to 144 (TNLSTPNPNQAN) and 188 to 201 (LNPQ…RPTS). 2 disordered regions span residues 133–239 (TNLS…GWER) and 255–359 (RTTT…YFVD). Over residues 202–217 (QIAPPNGAPPIANGQG) the composition is skewed to low complexity. Residues 231–264 (GRLPAGWERREDNLGRTYYVDHNTRTTTWNRPSA) enclose the WW 1 domain. Over residues 255–272 (RTTTWNRPSANYNEQTQR) the composition is skewed to polar residues. Basic and acidic residues predominate over residues 281 to 296 (LERRAHQNRMLPEDRT). The span at 297–312 (GASSPNLSETQPQAQT) shows a compositional bias: polar residues. The segment covering 320–339 (ASNSNVVSMMATGATTAGTG) has biased composition (low complexity). WW domains follow at residues 339-372 (GELP…DPRR) and 399-432 (GPLP…DPRL). Residues 488 to 821 (SASDLKKRLM…VEETLGFGQE (334 aa)) enclose the HECT domain. Cys-789 acts as the Glycyl thioester intermediate in catalysis.

It belongs to the RSP5/NEDD4 family. In terms of assembly, interacts with apyA and creD.

The protein resides in the cytoplasm. It carries out the reaction S-ubiquitinyl-[E2 ubiquitin-conjugating enzyme]-L-cysteine + [acceptor protein]-L-lysine = [E2 ubiquitin-conjugating enzyme]-L-cysteine + N(6)-ubiquitinyl-[acceptor protein]-L-lysine.. It participates in protein modification; protein ubiquitination. E3 ubiquitin-protein ligase which accepts ubiquitin from an E2 ubiquitin-conjugating enzyme in the form of a thioester and then directly transfers the ubiquitin to targeted substrates. Probably involved in the regulatory network controlling carbon source utilization. Ubiquitinates 'Lys-528' of the uric acid/xanthine transporter uapA at the cell membrane, leading to its internalization, sorting into the endosomal pathway to the vacuolar lumen where it is eventually degraded. This Emericella nidulans (strain FGSC A4 / ATCC 38163 / CBS 112.46 / NRRL 194 / M139) (Aspergillus nidulans) protein is E3 ubiquitin-protein ligase RSP5 (hulA).